Here is a 365-residue protein sequence, read N- to C-terminus: MKKLRVGVLFGGRSGEHEVSLKSANSILNALDRELFEVIPIGIRKNGEWISGEAPLEELETGIKNQGNYAVSILPDPSKKVLWKLDPFEKISEIDLIFPVLHGTFGEDGTVQGFLDLCGIPYVGSGVLGSSLAMDKVMMKKILRRHGLQVANYYSFKRSEWEQDRDEIIFSIEKQLSYPIFVKPANLGSSVGISKVKNREELIQGIDLAVKYDMKCLAEEFIPGKEIELSILGNDNPKTSVPGEIIPANEFYDYNAKYINNKSKLVIPAPLSETLKTKIEDMGVEAFRVLDCYGLSRVDYFVLEDQEEVYINEINTMPGFTEISMYPKLWTESGLSYSQLLTDLIYLALARQQEKDRNSTDFSES.

The ATP-grasp domain occupies 140–346 (KKILRRHGLQ…YSQLLTDLIY (207 aa)). Residue 173–228 (EKQLSYPIFVKPANLGSSVGISKVKNREELIQGIDLAVKYDMKCLAEEFIPGKEIE) participates in ATP binding. Mg(2+) is bound by residues aspartate 299, glutamate 313, and asparagine 315.

The protein belongs to the D-alanine--D-alanine ligase family. Mg(2+) serves as cofactor. Mn(2+) is required as a cofactor.

Its subcellular location is the cytoplasm. It catalyses the reaction 2 D-alanine + ATP = D-alanyl-D-alanine + ADP + phosphate + H(+). It functions in the pathway cell wall biogenesis; peptidoglycan biosynthesis. In terms of biological role, cell wall formation. This Natranaerobius thermophilus (strain ATCC BAA-1301 / DSM 18059 / JW/NM-WN-LF) protein is D-alanine--D-alanine ligase.